We begin with the raw amino-acid sequence, 163 residues long: MAFDFARATKYFLMWDFIKGFGLGMRYFVSPKPTLNYPHEKGPLSPRFRGEHALRRYPNGEERCIACKLCEAVCPAQAITIDAEPREDGSRRTTRYDIDMTKCIYCGFCQEACPVDAIVEGPNFEYATETREELFYDKQKLLANGERWEAEIARNLQLDAPYR.

4Fe-4S ferredoxin-type domains are found at residues 54–84 (LRRYPNGEERCIACKLCEAVCPAQAITIDAE) and 94–123 (TRYDIDMTKCIYCGFCQEACPVDAIVEGPN). [4Fe-4S] cluster is bound by residues Cys-64, Cys-67, Cys-70, Cys-74, Cys-103, Cys-106, Cys-109, and Cys-113.

It belongs to the complex I 23 kDa subunit family. NDH-1 is composed of at least 14 different subunits, Nqo1 to Nqo14. The complex has a L-shaped structure, with the hydrophobic arm (subunits Nqo7, Nqo8, Nqo10 to Nqo14) embedded in the inner membrane and the hydrophilic peripheral arm (subunits Nqo1 to Nqo6, Nqo9) protruding into the bacterial cytoplasm. The hydrophilic domain contains all the redox centers. NADH-quinone oxidoreductase forms a supercomplex with ubiquinol-cytochrome c reductase complex (complex III or cytochrome b-c1 complex) and cytochrome c oxidase (complex IV), which stabilizes the NADH-quinone oxidoreductase complex. [4Fe-4S] cluster is required as a cofactor.

Its subcellular location is the cell inner membrane. The catalysed reaction is a quinone + NADH + 5 H(+)(in) = a quinol + NAD(+) + 4 H(+)(out). Its function is as follows. NDH-1 shuttles electrons from NADH, via FMN and iron-sulfur (Fe-S) centers, to quinones in the respiratory chain. The immediate electron acceptor for the enzyme in this species is believed to be ubiquinone. Couples the redox reaction to proton translocation (for every two electrons transferred, four hydrogen ions are translocated across the cytoplasmic membrane), and thus conserves the redox energy in a proton gradient. The chain is NADH-quinone oxidoreductase subunit I from Paracoccus denitrificans (strain Pd 1222).